The following is a 100-amino-acid chain: MITKEEAQKIAKLARLKFEEDTVEKFSTQLSSIMNMIDILNEIDCKDIEPLTSVSNMNARMREDEVTSSDLSDKLLDHVSGQSAQLAKEVKYFITPKVIE.

The protein belongs to the GatC family. In terms of assembly, heterotrimer of A, B and C subunits.

It catalyses the reaction L-glutamyl-tRNA(Gln) + L-glutamine + ATP + H2O = L-glutaminyl-tRNA(Gln) + L-glutamate + ADP + phosphate + H(+). The enzyme catalyses L-aspartyl-tRNA(Asn) + L-glutamine + ATP + H2O = L-asparaginyl-tRNA(Asn) + L-glutamate + ADP + phosphate + 2 H(+). Allows the formation of correctly charged Asn-tRNA(Asn) or Gln-tRNA(Gln) through the transamidation of misacylated Asp-tRNA(Asn) or Glu-tRNA(Gln) in organisms which lack either or both of asparaginyl-tRNA or glutaminyl-tRNA synthetases. The reaction takes place in the presence of glutamine and ATP through an activated phospho-Asp-tRNA(Asn) or phospho-Glu-tRNA(Gln). The protein is Aspartyl/glutamyl-tRNA(Asn/Gln) amidotransferase subunit C of Rickettsia canadensis (strain McKiel).